The chain runs to 307 residues: Ribonuclease Z (307 aa).

Residues His63, His65, Asp67, His68, His141, Asp212, and His270 each coordinate Zn(2+). The active-site Proton acceptor is the Asp67.

Belongs to the RNase Z family. Homodimer. It depends on Zn(2+) as a cofactor.

The catalysed reaction is Endonucleolytic cleavage of RNA, removing extra 3' nucleotides from tRNA precursor, generating 3' termini of tRNAs. A 3'-hydroxy group is left at the tRNA terminus and a 5'-phosphoryl group is left at the trailer molecule.. Functionally, zinc phosphodiesterase, which displays some tRNA 3'-processing endonuclease activity. Probably involved in tRNA maturation, by removing a 3'-trailer from precursor tRNA. This chain is Ribonuclease Z, found in Bacillus thuringiensis subsp. konkukian (strain 97-27).